The chain runs to 391 residues: Phosphoglycerate kinase (391 aa).

Residues 21 to 23 (DLN), arginine 36, 59 to 62 (HLGR), arginine 113, and arginine 146 contribute to the substrate site. ATP-binding positions include lysine 197, glutamate 319, and 345–348 (GGDT).

It belongs to the phosphoglycerate kinase family. As to quaternary structure, monomer.

The protein localises to the cytoplasm. It carries out the reaction (2R)-3-phosphoglycerate + ATP = (2R)-3-phospho-glyceroyl phosphate + ADP. It participates in carbohydrate degradation; glycolysis; pyruvate from D-glyceraldehyde 3-phosphate: step 2/5. The chain is Phosphoglycerate kinase from Stenotrophomonas maltophilia (strain R551-3).